Reading from the N-terminus, the 630-residue chain is MDFPSRFEVIVIGGGHAGTEAALASARMGVKTLLLTHNVETLGHMSCNPAIGGIGKSHLVKEIDALGGAMALATDMSGIQFRVLNNRKGPAVRATRAQADRAIYKAVVREILENQPNLWIFQQSCDDLIVEQDQVKGVVTQMGLRFFADSVVLTSGTFLGGLIHIGLQNYSGGRAGDPPANALAQRMRELPLRVGRLKTGTPPRIDGRSVDFSVMTEQPGDTPIPVMSFMGNAAMHPRQVSCWITHTNARTHEIIASNLDRSPMYSGVIEGIGPRYCPSIEDKIHRFADKESHQVFIEPEGLTTHELYPNGISTSLPFDVQLEIVRSIRGMENAHIVRPGYAIEYDYFDPRDLKYSLETKVIGGLFFAGQINGTTGYEEAGAQGLLAGTNAALRAQGRESWCPRRDEAYIGVLVDDLITLGTQEPYRMFTSRAEYRLILREDNADLRLTEKGRELGLIDDARWAAFCAKREGIEREEQRLKSTWVRPGTPQGQAVVDKFGTPLAHEYSLLNLLARPEVDYAGLIEATGGEVIDPQVAEQVEIKTKYAGYIDRQQEEIARLRASEDTRLPVDIDYTTISGLSKEIQGKLEQTRPETLGQASRIPGVTPAAISLLLIHLKKRGAGRELEQSA.

Position 13–18 (13–18) interacts with FAD; that stretch reads GGGHAG. 273 to 287 lines the NAD(+) pocket; sequence GPRYCPSIEDKIHRF.

It belongs to the MnmG family. Homodimer. Heterotetramer of two MnmE and two MnmG subunits. FAD is required as a cofactor.

It localises to the cytoplasm. In terms of biological role, NAD-binding protein involved in the addition of a carboxymethylaminomethyl (cmnm) group at the wobble position (U34) of certain tRNAs, forming tRNA-cmnm(5)s(2)U34. The sequence is that of tRNA uridine 5-carboxymethylaminomethyl modification enzyme MnmG from Pseudomonas entomophila (strain L48).